The primary structure comprises 68 residues: Large ribosomal subunit protein bL32 (68 aa).

Belongs to the bacterial ribosomal protein bL32 family.

This Ruegeria pomeroyi (strain ATCC 700808 / DSM 15171 / DSS-3) (Silicibacter pomeroyi) protein is Large ribosomal subunit protein bL32.